The following is a 320-amino-acid chain: Ribonuclease Z (320 aa).

His-62, His-64, Asp-66, His-67, His-139, Asp-210, and His-268 together coordinate Zn(2+). The active-site Proton acceptor is the Asp-66.

It belongs to the RNase Z family. As to quaternary structure, homodimer. The cofactor is Zn(2+).

The enzyme catalyses Endonucleolytic cleavage of RNA, removing extra 3' nucleotides from tRNA precursor, generating 3' termini of tRNAs. A 3'-hydroxy group is left at the tRNA terminus and a 5'-phosphoryl group is left at the trailer molecule.. Its function is as follows. Zinc phosphodiesterase, which displays some tRNA 3'-processing endonuclease activity. Probably involved in tRNA maturation, by removing a 3'-trailer from precursor tRNA. The protein is Ribonuclease Z of Cyanothece sp. (strain PCC 7425 / ATCC 29141).